The primary structure comprises 236 residues: 2,3,4,5-tetrahydropyridine-2,6-dicarboxylate N-acetyltransferase (236 aa).

This sequence belongs to the transferase hexapeptide repeat family. DapH subfamily.

It catalyses the reaction (S)-2,3,4,5-tetrahydrodipicolinate + acetyl-CoA + H2O = L-2-acetamido-6-oxoheptanedioate + CoA. It functions in the pathway amino-acid biosynthesis; L-lysine biosynthesis via DAP pathway; LL-2,6-diaminopimelate from (S)-tetrahydrodipicolinate (acetylase route): step 1/3. Its function is as follows. Catalyzes the transfer of an acetyl group from acetyl-CoA to tetrahydrodipicolinate. The polypeptide is 2,3,4,5-tetrahydropyridine-2,6-dicarboxylate N-acetyltransferase (Listeria innocua serovar 6a (strain ATCC BAA-680 / CLIP 11262)).